The primary structure comprises 347 residues: Globoside alpha-1,3-N-acetylgalactosaminyltransferase 1 (347 aa).

At 1-5 the chain is on the cytoplasmic side; the sequence is MRCRR. Residues 6–26 traverse the membrane as a helical; Signal-anchor for type II membrane protein segment; sequence LALGLGFSLLSGIALWSLWIY. At 27–347 the chain is on the lumenal side; it reads METWLPFSYV…LDKATSWLRS (321 aa). N108 is a glycosylation site (N-linked (GlcNAc...) asparagine). Residues 116 to 121, 206 to 208, and 228 to 231 each bind substrate; these read FAVGKY, DVD, and HPGY. 2 residues coordinate Mn(2+): D206 and D208. Residue E298 is the Nucleophile of the active site.

The protein belongs to the glycosyltransferase 6 family. Mn(2+) serves as cofactor.

The protein resides in the golgi apparatus membrane. It catalyses the reaction a globoside Gb4Cer (d18:1(4E)) + UDP-N-acetyl-alpha-D-galactosamine = a globoside Forssman (d18:1(4E)) + UDP + H(+). The enzyme catalyses a globoside Gb4Cer + UDP-N-acetyl-alpha-D-galactosamine = a globoside IV3GalNAc-Gb4Cer + UDP + H(+). It functions in the pathway protein modification; protein glycosylation. Catalyzes the formation of Forssman glycolipid via the addition of N-acetylgalactosamine (GalNAc) in alpha-1,3-linkage to GalNAcb-1,3Gala-1,4Galb-1,4GlcCer (Gb4Cer). Forssman glycolipid (also called Forssman antigen; FG) probably serves for adherence of some pathogens such as E.coli uropathogenic strains. This Canis lupus familiaris (Dog) protein is Globoside alpha-1,3-N-acetylgalactosaminyltransferase 1.